Here is a 177-residue protein sequence, read N- to C-terminus: Large ribosomal subunit protein uL6 (177 aa).

It belongs to the universal ribosomal protein uL6 family. In terms of assembly, part of the 50S ribosomal subunit.

In terms of biological role, this protein binds to the 23S rRNA, and is important in its secondary structure. It is located near the subunit interface in the base of the L7/L12 stalk, and near the tRNA binding site of the peptidyltransferase center. The sequence is that of Large ribosomal subunit protein uL6 from Acinetobacter baumannii (strain AB307-0294).